Reading from the N-terminus, the 120-residue chain is U13-lycotoxin-Ls1a (120 aa).

A signal peptide spans 1–16; sequence MKILFVLISILHAVYC. Residues 17–54 constitute a propeptide that is removed on maturation; it reads FSSEEDVDSAYLANELEPVEDINSEQYAALEPKEEHER. 4 disulfides stabilise this stretch: C56–C70, C63–C76, C69–C87, and C78–C85. Residues 56 to 95 enclose the Agouti domain; that stretch reads CADMGQDCKDDCDCCLNIATCNCWFGRYFCSCTFGDYQTC.

Belongs to the neurotoxin 05 (agouti) family. Post-translationally, contains 6 disulfide bonds. In terms of tissue distribution, expressed by the venom gland.

It is found in the secreted. This is U13-lycotoxin-Ls1a from Lycosa singoriensis (Wolf spider).